The following is a 403-amino-acid chain: Tyrosine--tRNA ligase (403 aa).

Positions 42–51 (PTAPDLHLGH) match the 'HIGH' region motif. The short motif at 226–230 (KMSKS) is the 'KMSKS' region element. Residue K229 participates in ATP binding. The 61-residue stretch at 336-396 (MPISAVLNKA…GKKAFGRVTL (61 aa)) folds into the S4 RNA-binding domain.

The protein belongs to the class-I aminoacyl-tRNA synthetase family. TyrS type 2 subfamily. As to quaternary structure, homodimer.

Its subcellular location is the cytoplasm. The catalysed reaction is tRNA(Tyr) + L-tyrosine + ATP = L-tyrosyl-tRNA(Tyr) + AMP + diphosphate + H(+). In terms of biological role, catalyzes the attachment of tyrosine to tRNA(Tyr) in a two-step reaction: tyrosine is first activated by ATP to form Tyr-AMP and then transferred to the acceptor end of tRNA(Tyr). The polypeptide is Tyrosine--tRNA ligase (Pseudomonas savastanoi pv. phaseolicola (strain 1448A / Race 6) (Pseudomonas syringae pv. phaseolicola (strain 1448A / Race 6))).